Here is a 545-residue protein sequence, read N- to C-terminus: Probable target of rapamycin complex 2 subunit BIT2 (545 aa).

2 disordered regions span residues Met1–Lys24 and Asp78–Ser166. Composition is skewed to polar residues over residues Ala11 to Lys24, Ile106 to Arg130, and Arg151 to Ser166.

Interacts with the target of rapamycin complex 2 (TORC2) subunit TSC11 and the TORC2 effectors SLM1 and SLM2.

The sequence is that of Probable target of rapamycin complex 2 subunit BIT2 (BIT2) from Saccharomyces cerevisiae (strain ATCC 204508 / S288c) (Baker's yeast).